The following is a 499-amino-acid chain: Serine carboxypeptidase-like 34 (499 aa).

Residues 1–25 form the signal peptide; sequence MGSHSVEFSVLVLFLVSFLLGSTSA. N-linked (GlcNAc...) asparagine glycosylation is found at asparagine 73, asparagine 124, and asparagine 158. Disulfide bonds link cysteine 106/cysteine 383, cysteine 269/cysteine 280, and cysteine 304/cysteine 351. The active site involves serine 200. N-linked (GlcNAc...) asparagine glycosylation is found at asparagine 310, asparagine 372, and asparagine 375. Catalysis depends on residues aspartate 419 and histidine 471.

The protein belongs to the peptidase S10 family. In terms of tissue distribution, ubiquitous.

It is found in the secreted. Its function is as follows. Probable carboxypeptidase. The protein is Serine carboxypeptidase-like 34 (SCPL34) of Arabidopsis thaliana (Mouse-ear cress).